We begin with the raw amino-acid sequence, 77 residues long: UPF0401 protein ECP_3010 (77 aa).

Belongs to the UPF0401 family.

This Escherichia coli O6:K15:H31 (strain 536 / UPEC) protein is UPF0401 protein ECP_3010.